Here is a 428-residue protein sequence, read N- to C-terminus: MLQPQIKLNAKNEIYVPGDKSISHRTVLFCALSQGKSEIHGFLEGEDPLHTLRCFESMGLSVSSLGKGSYSVVSPGKQNLNSPKGVLDFGNAGTGIRLSAGLLAGLPGMNATLTGDASLCKRPMARIMNPLQEMGASVISVEGNDRAPLRIEGKQLKDYSYVSPIASAQIKSALVLAALASDISIEYKESEVSRDHTENMIRFLGGTITHHSSVHFTVKPPYHFEGTKYVIPGDISSAAFFIVFGLCVGGSEPLLIKNIGLNPSRIGILTVLQNMGGKIEIIAKRVECGEEIGDLLVYPSKLKRTVITEDLIPSIIDEIPILTIAGLFSEGGFQISHAEELRAKESDRIRSMVSNLERLGVKVKEVNDGYEFDEVGTIQNAKIETFMDHRIAMSFAILSKLSGVSLSFDDTSWVDTSFPGFFEILKSV.

3 residues coordinate 3-phosphoshikimate: lysine 20, serine 21, and arginine 25. Lysine 20 serves as a coordination point for phosphoenolpyruvate. Glycine 93 and arginine 122 together coordinate phosphoenolpyruvate. The 3-phosphoshikimate site is built by serine 167, glutamine 169, aspartate 317, and lysine 344. Phosphoenolpyruvate is bound at residue glutamine 169. Aspartate 317 (proton acceptor) is an active-site residue. Residues arginine 348 and arginine 390 each coordinate phosphoenolpyruvate.

The protein belongs to the EPSP synthase family. As to quaternary structure, monomer.

The protein localises to the cytoplasm. It carries out the reaction 3-phosphoshikimate + phosphoenolpyruvate = 5-O-(1-carboxyvinyl)-3-phosphoshikimate + phosphate. It participates in metabolic intermediate biosynthesis; chorismate biosynthesis; chorismate from D-erythrose 4-phosphate and phosphoenolpyruvate: step 6/7. Its function is as follows. Catalyzes the transfer of the enolpyruvyl moiety of phosphoenolpyruvate (PEP) to the 5-hydroxyl of shikimate-3-phosphate (S3P) to produce enolpyruvyl shikimate-3-phosphate and inorganic phosphate. This chain is 3-phosphoshikimate 1-carboxyvinyltransferase, found in Leptospira biflexa serovar Patoc (strain Patoc 1 / ATCC 23582 / Paris).